The chain runs to 128 residues: Aspartate 1-decarboxylase (128 aa).

Ser-25 (schiff-base intermediate with substrate; via pyruvic acid) is an active-site residue. Position 25 is a pyruvic acid (Ser) (Ser-25). Thr-57 contacts substrate. Residue Tyr-58 is the Proton donor of the active site. A substrate-binding site is contributed by 73 to 75 (GSA).

Belongs to the PanD family. Heterooctamer of four alpha and four beta subunits. Requires pyruvate as cofactor. Is synthesized initially as an inactive proenzyme, which is activated by self-cleavage at a specific serine bond to produce a beta-subunit with a hydroxyl group at its C-terminus and an alpha-subunit with a pyruvoyl group at its N-terminus.

It is found in the cytoplasm. The catalysed reaction is L-aspartate + H(+) = beta-alanine + CO2. Its pathway is cofactor biosynthesis; (R)-pantothenate biosynthesis; beta-alanine from L-aspartate: step 1/1. Its function is as follows. Catalyzes the pyruvoyl-dependent decarboxylation of aspartate to produce beta-alanine. The protein is Aspartate 1-decarboxylase of Burkholderia mallei (strain NCTC 10247).